The sequence spans 453 residues: tRNA modification GTPase MnmE (453 aa).

The (6S)-5-formyl-5,6,7,8-tetrahydrofolate site is built by R22, E79, and K119. The TrmE-type G domain occupies 215 to 376 (GMKVVIAGRP…LKQHLKSLMG (162 aa)). N225 is a binding site for K(+). GTP contacts are provided by residues 225–230 (NAGKSS), 244–250 (TEIAGTT), 269–272 (DTAG), and 334–337 (NKAD). Mg(2+) is bound at residue S229. K(+)-binding residues include T244, I246, and T249. T250 is a Mg(2+) binding site. K453 serves as a coordination point for (6S)-5-formyl-5,6,7,8-tetrahydrofolate.

The protein belongs to the TRAFAC class TrmE-Era-EngA-EngB-Septin-like GTPase superfamily. TrmE GTPase family. As to quaternary structure, homodimer. Heterotetramer of two MnmE and two MnmG subunits. K(+) is required as a cofactor.

It localises to the cytoplasm. Functionally, exhibits a very high intrinsic GTPase hydrolysis rate. Involved in the addition of a carboxymethylaminomethyl (cmnm) group at the wobble position (U34) of certain tRNAs, forming tRNA-cmnm(5)s(2)U34. The protein is tRNA modification GTPase MnmE of Shewanella halifaxensis (strain HAW-EB4).